We begin with the raw amino-acid sequence, 232 residues long: Sec-independent protein translocase protein TatB (232 aa).

The helical transmembrane segment at 1-21 threads the bilayer; the sequence is MFDIGFGELMLLFVIGLVVLG. Disordered stretches follow at residues 108 to 129 and 176 to 232; these read EPHTIHNPLVTDPEALHDGVTP and AAST…NNDR. 2 stretches are compositionally biased toward low complexity: residues 189-203 and 214-232; these read ADSAANLATQAATPA and RAATATGPASSTSPLNNDR.

It belongs to the TatB family. In terms of assembly, the Tat system comprises two distinct complexes: a TatABC complex, containing multiple copies of TatA, TatB and TatC subunits, and a separate TatA complex, containing only TatA subunits. Substrates initially bind to the TatABC complex, which probably triggers association of the separate TatA complex to form the active translocon.

The protein localises to the cell inner membrane. Its function is as follows. Part of the twin-arginine translocation (Tat) system that transports large folded proteins containing a characteristic twin-arginine motif in their signal peptide across membranes. Together with TatC, TatB is part of a receptor directly interacting with Tat signal peptides. TatB may form an oligomeric binding site that transiently accommodates folded Tat precursor proteins before their translocation. The protein is Sec-independent protein translocase protein TatB of Sodalis glossinidius (strain morsitans).